The following is a 492-amino-acid chain: MTGMSREEVESLIQEVLEVYPEKARKDRNKHLAVNDPAVTQSKKCIISNKKSQPGLMTIRGCAYAGSKGVVWGPIKDMIHISHGPVGCGQYSRAGRRNYYIGTTGVNAFVTMNFTSDFQEKDIVFGGDKKLAKLIDEVETLFPLNKGISVQSECPIGLIGDDIESVSKVKGAELSKTIVPVRCEGFRGVSQSLGHHIANDAVRDWVLGKRDEDTTFASTPYDVAIIGDYNIGGDAWSSRILLEEMGLRCVAQWSGDGSISEIELTPKVKLNLVHCYRSMNYISRHMEEKYGIPWMEYNFFGPTKTIESLRAIAAKFDESIQKKCEEVIAKYKPEWEAVVAKYRPRLEGKRVMLYIGGLRPRHVIGAYEDLGMEVVGTGYEFAHNDDYDRTMKEMGDSTLLYDDVTGYEFEEFVKRIKPDLIGSGIKEKFIFQKMGIPFREMHSWDYSGPYHGFDGFAIFARDMDMTLNNPCWKKLQAPWEASEGAEKVAASA.

The [8Fe-7S] cluster site is built by Cys-62, Cys-88, and Cys-154. The [7Fe-Mo-9S-C-homocitryl] cluster site is built by Cys-275 and His-442.

It belongs to the NifD/NifK/NifE/NifN family. In terms of assembly, tetramer of two alpha and two beta chains. Forms complex with the iron protein (nitrogenase component 2). [8Fe-7S] cluster serves as cofactor. [7Fe-Mo-9S-C-homocitryl] cluster is required as a cofactor.

It catalyses the reaction N2 + 8 reduced [2Fe-2S]-[ferredoxin] + 16 ATP + 16 H2O = H2 + 8 oxidized [2Fe-2S]-[ferredoxin] + 2 NH4(+) + 16 ADP + 16 phosphate + 6 H(+). Nitrogenase holoenzyme is subject to 'conformational protection' by FeSII; under oxidizing conditions FeSII binds to the holoenzyme and reversibly protects it from oxidation. This molybdenum-iron protein is part of the nitrogenase complex that catalyzes the key enzymatic reactions in nitrogen fixation. The chain is Nitrogenase molybdenum-iron protein alpha chain (nifD) from Azotobacter vinelandii.